Here is a 249-residue protein sequence, read N- to C-terminus: Triosephosphate isomerase (249 aa).

9–11 (NWK) contributes to the substrate binding site. Histidine 94 serves as the catalytic Electrophile. The active-site Proton acceptor is glutamate 166. Residues glycine 172, serine 211, and 232-233 (GG) each bind substrate.

It belongs to the triosephosphate isomerase family. In terms of assembly, homodimer.

It localises to the cytoplasm. It catalyses the reaction D-glyceraldehyde 3-phosphate = dihydroxyacetone phosphate. The protein operates within carbohydrate biosynthesis; gluconeogenesis. It functions in the pathway carbohydrate degradation; glycolysis; D-glyceraldehyde 3-phosphate from glycerone phosphate: step 1/1. In terms of biological role, involved in the gluconeogenesis. Catalyzes stereospecifically the conversion of dihydroxyacetone phosphate (DHAP) to D-glyceraldehyde-3-phosphate (G3P). This chain is Triosephosphate isomerase, found in Moorella thermoacetica (strain ATCC 39073 / JCM 9320).